Here is a 346-residue protein sequence, read N- to C-terminus: Ketol-acid reductoisomerase (NADP(+)) (346 aa).

Positions 1-189 (MQVYYDRDAD…GGGRSGIIET (189 aa)) constitute a KARI N-terminal Rossmann domain. NADP(+) contacts are provided by residues 24–27 (YGSQ), R48, S51, T53, and 83–86 (DEHQ). H108 is an active-site residue. An NADP(+)-binding site is contributed by G134. One can recognise a KARI C-terminal knotted domain in the interval 190–335 (TFKEECETDL…EKLRAMMPWI (146 aa)). Mg(2+) is bound by residues D198, E202, E234, and E238. S259 is a binding site for substrate.

Belongs to the ketol-acid reductoisomerase family. Mg(2+) serves as cofactor.

The enzyme catalyses (2R)-2,3-dihydroxy-3-methylbutanoate + NADP(+) = (2S)-2-acetolactate + NADPH + H(+). The catalysed reaction is (2R,3R)-2,3-dihydroxy-3-methylpentanoate + NADP(+) = (S)-2-ethyl-2-hydroxy-3-oxobutanoate + NADPH + H(+). It participates in amino-acid biosynthesis; L-isoleucine biosynthesis; L-isoleucine from 2-oxobutanoate: step 2/4. It functions in the pathway amino-acid biosynthesis; L-valine biosynthesis; L-valine from pyruvate: step 2/4. Its function is as follows. Involved in the biosynthesis of branched-chain amino acids (BCAA). Catalyzes an alkyl-migration followed by a ketol-acid reduction of (S)-2-acetolactate (S2AL) to yield (R)-2,3-dihydroxy-isovalerate. In the isomerase reaction, S2AL is rearranged via a Mg-dependent methyl migration to produce 3-hydroxy-3-methyl-2-ketobutyrate (HMKB). In the reductase reaction, this 2-ketoacid undergoes a metal-dependent reduction by NADPH to yield (R)-2,3-dihydroxy-isovalerate. This chain is Ketol-acid reductoisomerase (NADP(+)), found in Sphingopyxis alaskensis (strain DSM 13593 / LMG 18877 / RB2256) (Sphingomonas alaskensis).